Reading from the N-terminus, the 192-residue chain is Interleukin-18 (192 aa).

The propeptide occupies 1-35; sequence MAAMSEDSCVNFKEMMFIDNTLYFIPEENGDLESD.

The protein belongs to the IL-1 family. Forms a ternary complex with ligand-binding receptor subunit IL18R1 and signaling receptor subunit IL18RAP at the plasma membrane. Mature IL18 first binds to IL18R1 forming a low affinity binary complex, which then interacts with IL18RAP to form a high affinity ternary complex that signals inside the cell. Interacts with cargo receptor TMED10; the interaction mediates the translocation from the cytoplasm into the ERGIC (endoplasmic reticulum-Golgi intermediate compartment) and thereby secretion. In terms of processing, the pro-IL-18 precursor is processed by CASP1 to yield its mature, active form. The pro-IL-18 precursor is however not processed by Casp4/Casp11 in rodents. The pro-IL-18 precursor features autoinhibitory interactions between the propeptide and the post-cleavage-site region, preventing recognition by the IL18R1 receptor. Processing by CASP1 induces conformational changes to generate critical receptor-binding sites. The mature form is then secreted and released in the extracellular milieu by passing through the gasdermin-D (GSDMD) pore. In contrast, cleavage by CASP3 inactivates IL18.

Its subcellular location is the cytoplasm. It is found in the secreted. Pro-inflammatory cytokine primarily involved in epithelial barrier repair, polarized T-helper 1 (Th1) cell and natural killer (NK) cell immune responses. Upon binding to IL18R1 and IL18RAP, forms a signaling ternary complex which activates NF-kappa-B, triggering synthesis of inflammatory mediators. Synergizes with IL12/interleukin-12 to induce IFNG synthesis from T-helper 1 (Th1) cells and natural killer (NK) cells. Involved in transduction of inflammation downstream of pyroptosis: its mature form is specifically released in the extracellular milieu by passing through the gasdermin-D (GSDMD) pore. This chain is Interleukin-18, found in Mus musculus (Mouse).